The sequence spans 633 residues: 1-deoxy-D-xylulose-5-phosphate synthase (633 aa).

The segment covering 1 to 12 (MSEPTANLQPAS) has biased composition (polar residues). The interval 1 to 21 (MSEPTANLQPASRTPLLDRVN) is disordered. Thiamine diphosphate contacts are provided by residues His-86 and 127–129 (GHA). Asp-158 serves as a coordination point for Mg(2+). Residues 159 to 160 (GS), Asn-187, and Glu-377 each bind thiamine diphosphate. A Mg(2+)-binding site is contributed by Asn-187.

The protein belongs to the transketolase family. DXPS subfamily. In terms of assembly, homodimer. Mg(2+) is required as a cofactor. Thiamine diphosphate serves as cofactor.

It carries out the reaction D-glyceraldehyde 3-phosphate + pyruvate + H(+) = 1-deoxy-D-xylulose 5-phosphate + CO2. It participates in metabolic intermediate biosynthesis; 1-deoxy-D-xylulose 5-phosphate biosynthesis; 1-deoxy-D-xylulose 5-phosphate from D-glyceraldehyde 3-phosphate and pyruvate: step 1/1. Its function is as follows. Catalyzes the acyloin condensation reaction between C atoms 2 and 3 of pyruvate and glyceraldehyde 3-phosphate to yield 1-deoxy-D-xylulose-5-phosphate (DXP). This is 1-deoxy-D-xylulose-5-phosphate synthase from Deinococcus geothermalis (strain DSM 11300 / CIP 105573 / AG-3a).